Here is a 273-residue protein sequence, read N- to C-terminus: Large ribosomal subunit protein uL2 (273 aa).

Residues 228–273 form a disordered region; that stretch reads IDHPHGGGEGKTSGGRHPVTPWGFSTKGKKTRKNKRTSKFIVKKRK. The segment covering 254–273 has biased composition (basic residues); it reads KGKKTRKNKRTSKFIVKKRK.

The protein belongs to the universal ribosomal protein uL2 family. Part of the 50S ribosomal subunit. Forms a bridge to the 30S subunit in the 70S ribosome.

Its function is as follows. One of the primary rRNA binding proteins. Required for association of the 30S and 50S subunits to form the 70S ribosome, for tRNA binding and peptide bond formation. It has been suggested to have peptidyltransferase activity; this is somewhat controversial. Makes several contacts with the 16S rRNA in the 70S ribosome. The chain is Large ribosomal subunit protein uL2 from Rickettsia typhi (strain ATCC VR-144 / Wilmington).